A 607-amino-acid polypeptide reads, in one-letter code: Siderochrome iron transporter 2 (607 aa).

The interval 1 to 46 (MGLFGSFGARNKATPQVPPGAVAKAPEGTPKGPETNDQPDMDSSRL) is disordered. A run of 13 helical transmembrane segments spans residues 86 to 106 (VWAT…QSGI), 129 to 149 (ILSS…LNLW), 152 to 172 (AEGF…LAAC), 180 to 200 (AGYV…DVFV), 210 to 230 (AFTF…APLA), 242 to 262 (WAYG…AVVF), 297 to 317 (IIGA…FSLA), 326 to 346 (SAAF…FAAW), 367 to 387 (LGAC…DLYF), 404 to 424 (YMTQ…GLWV), 432 to 452 (HTCL…MIHF), 459 to 479 (IGYV…LVIG), and 499 to 519 (FIGL…AAIY). Residue Asn538 is glycosylated (N-linked (GlcNAc...) asparagine). Residues 573–593 (FGAVAATCILILGIPAIAVWK) traverse the membrane as a helical segment.

It belongs to the major facilitator superfamily.

The protein resides in the cell membrane. Major facilitator transporter involved in ferrichrome (FC) uptake. This is Siderochrome iron transporter 2 from Aspergillus fumigatus (strain ATCC MYA-4609 / CBS 101355 / FGSC A1100 / Af293) (Neosartorya fumigata).